The chain runs to 86 residues: Superoxide dismutase [Cu-Zn] (86 aa).

The disordered stretch occupies residues 1-26 (AKEKGGKLTAGLAAGGHWNPNKAPHH). Over residues 7 to 16 (KLTAGLAAGG) the composition is skewed to low complexity. His17 contacts Cu cation. Zn(2+) contacts are provided by His17, His26, His35, and Asp38. Residue His73 coordinates Cu cation.

This sequence belongs to the Cu-Zn superoxide dismutase family. Homodimer. Cu cation serves as cofactor. Zn(2+) is required as a cofactor.

The protein localises to the periplasm. It catalyses the reaction 2 superoxide + 2 H(+) = H2O2 + O2. Destroys radicals which are normally produced within the cells and which are toxic to biological systems. This chain is Superoxide dismutase [Cu-Zn] (sodC), found in Mannheimia haemolytica (Pasteurella haemolytica).